A 176-amino-acid polypeptide reads, in one-letter code: HTH-type transcriptional regulator DctR (176 aa).

An HTH luxR-type domain is found at 109–174; it reads VPEADVSLSR…ELVRHQHINY (66 aa). The H-T-H motif DNA-binding region spans 133–152; sequence TEDILEKLKISLKTFYCHKH.

Its function is as follows. May act as a transcriptional regulator of dctA. The sequence is that of HTH-type transcriptional regulator DctR (dctR) from Escherichia coli O6:H1 (strain CFT073 / ATCC 700928 / UPEC).